Consider the following 386-residue polypeptide: Glyceraldehyde-3-phosphate dehydrogenase, chloroplastic (386 aa).

The N-terminal 45 residues, 1–45, are a transit peptide targeting the chloroplast; sequence MAYFKAVAYLAALASAAAFNPGSSFVPRLNAPATQPKAAKMTGPT. NADP(+) contacts are provided by residues 58–59 and R125; that span reads RI. Residues 197 to 199, T228, 257 to 258, and R280 each bind D-glyceraldehyde 3-phosphate; these read SCT and TG. The Nucleophile role is filled by C198. Residue N362 participates in NADP(+) binding.

This sequence belongs to the glyceraldehyde-3-phosphate dehydrogenase family. Homotetramer.

The protein resides in the plastid. Its subcellular location is the chloroplast. It carries out the reaction D-glyceraldehyde 3-phosphate + phosphate + NADP(+) = (2R)-3-phospho-glyceroyl phosphate + NADPH + H(+). The enzyme catalyses D-glyceraldehyde 3-phosphate + phosphate + NAD(+) = (2R)-3-phospho-glyceroyl phosphate + NADH + H(+). Its pathway is carbohydrate biosynthesis; Calvin cycle. The sequence is that of Glyceraldehyde-3-phosphate dehydrogenase, chloroplastic (GAPC1) from Guillardia theta (Cryptophyte).